We begin with the raw amino-acid sequence, 386 residues long: 5-hydroxytryptamine receptor 1B (386 aa).

Over 1 to 42 (MEEQGIQCAPPPPAASQTGVPLTNLSHNCSADGYIYQDSIAL) the chain is Extracellular. N-linked (GlcNAc...) asparagine glycans are attached at residues asparagine 24 and asparagine 28. Residues 43–68 (PWKVLLVALLALITLATTLSNAFVIA) traverse the membrane as a helical segment. Residues 69-82 (TVYRTRKLHTPANY) are Cytoplasmic-facing. A helical transmembrane segment spans residues 83 to 107 (LIASLAVTDLLVSILVMPISTMYTV). Residues 108 to 115 (TGRWTLGQ) are Extracellular-facing. A helical transmembrane segment spans residues 116-141 (VVCDFWLSSDITCCTASIMHLCVIAL). A disulfide bond links cysteine 118 and cysteine 195. 2 residues coordinate ergotamine: aspartate 125 and threonine 130. A DRY motif; important for ligand-induced conformation changes and signaling motif is present at residues 142–144 (DRY). Residues 142 to 161 (DRYWAITDAVEYSAKRTPKR) lie on the Cytoplasmic side of the membrane. A helical transmembrane segment spans residues 162-180 (AAIMIVLVWVFSISISLPP). Over 181 to 201 (FFWRQAKAEEEMLDCFVNTDH) the chain is Extracellular. Valine 197 contributes to the ergotamine binding site. A helical membrane pass occupies residues 202–225 (VLYTVYSTVGAFYLPTLLLIALYG). Residues 226–311 (RIYVEARSRI…AARERKATKT (86 aa)) are Cytoplasmic-facing. The segment covering 255–268 (DSPGSTSSVTSINS) has biased composition (polar residues). The tract at residues 255–278 (DSPGSTSSVTSINSRAPDVPSESG) is disordered. The helical transmembrane segment at 312 to 333 (LGIILGAFIVCWLPFFIISLVM) threads the bilayer. Residues 334-343 (PICKDACWFH) are Extracellular-facing. The helical transmembrane segment at 344–366 (MAIFDFFNWLGYLNSLINPIIYT) threads the bilayer. An NPxxY motif; important for ligand-induced conformation changes and signaling motif is present at residues 361 to 365 (NPIIY). Topologically, residues 367-386 (MSNEDFKQAFHKLIRFKCAG) are cytoplasmic. A lipid anchor (S-palmitoyl cysteine) is attached at cysteine 384.

Belongs to the G-protein coupled receptor 1 family. Homodimer. Heterodimer with HTR1D. Phosphorylated. Desensitization of the receptor may be mediated by its phosphorylation. In terms of processing, palmitoylated. As to expression, predominantly expressed in striatum and Purkinje cells.

Its subcellular location is the cell membrane. G-protein coupled receptor for 5-hydroxytryptamine (serotonin). Also functions as a receptor for ergot alkaloid derivatives, various anxiolytic and antidepressant drugs and other psychoactive substances, such as lysergic acid diethylamide (LSD). Ligand binding causes a conformation change that triggers signaling via guanine nucleotide-binding proteins (G proteins) and modulates the activity of downstream effectors, such as adenylate cyclase. HTR1B is coupled to G(i)/G(o) G alpha proteins and mediates inhibitory neurotransmission by inhibiting adenylate cyclase activity. Arrestin family members inhibit signaling via G proteins and mediate activation of alternative signaling pathways. Regulates the release of 5-hydroxytryptamine, dopamine and acetylcholine in the brain, and thereby affects neural activity, nociceptive processing, pain perception, mood and behavior. Besides, plays a role in vasoconstriction of cerebral arteries. This Mus musculus (Mouse) protein is 5-hydroxytryptamine receptor 1B (Htr1b).